The sequence spans 200 residues: Holliday junction branch migration complex subunit RuvA (200 aa).

The interval 1-64 (MLSYLSGTLI…EDALQLYGFI (64 aa)) is domain I. The domain II stretch occupies residues 65-143 (TTEDREVFKL…KLDLKIDIKE (79 aa)). The interval 144–148 (TAFRS) is flexible linker. Positions 149 to 200 (DKQQVRNDAYSALISLGFTKSIAEKAMRAAIAEVPDGSVDDLIRVALRHVQS) are domain III.

This sequence belongs to the RuvA family. Homotetramer. Forms an RuvA(8)-RuvB(12)-Holliday junction (HJ) complex. HJ DNA is sandwiched between 2 RuvA tetramers; dsDNA enters through RuvA and exits via RuvB. An RuvB hexamer assembles on each DNA strand where it exits the tetramer. Each RuvB hexamer is contacted by two RuvA subunits (via domain III) on 2 adjacent RuvB subunits; this complex drives branch migration. In the full resolvosome a probable DNA-RuvA(4)-RuvB(12)-RuvC(2) complex forms which resolves the HJ.

It localises to the cytoplasm. In terms of biological role, the RuvA-RuvB-RuvC complex processes Holliday junction (HJ) DNA during genetic recombination and DNA repair, while the RuvA-RuvB complex plays an important role in the rescue of blocked DNA replication forks via replication fork reversal (RFR). RuvA specifically binds to HJ cruciform DNA, conferring on it an open structure. The RuvB hexamer acts as an ATP-dependent pump, pulling dsDNA into and through the RuvAB complex. HJ branch migration allows RuvC to scan DNA until it finds its consensus sequence, where it cleaves and resolves the cruciform DNA. This chain is Holliday junction branch migration complex subunit RuvA, found in Chloroherpeton thalassium (strain ATCC 35110 / GB-78).